The sequence spans 109 residues: Thioredoxin 2 (109 aa).

The Thioredoxin domain maps to 2-109; sequence SGKYFEATDQ…IAKKLDEHIG (108 aa). C33 and C36 are joined by a disulfide.

The protein belongs to the thioredoxin family.

In terms of biological role, participates in various redox reactions through the reversible oxidation of its active center dithiol to a disulfide and catalyzes dithiol-disulfide exchange reactions. This chain is Thioredoxin 2 (trx2), found in Chlorobaculum tepidum (strain ATCC 49652 / DSM 12025 / NBRC 103806 / TLS) (Chlorobium tepidum).